The following is a 1317-amino-acid chain: Clustered mitochondria protein homolog (1317 aa).

The region spanning 382–626 (DITRSQESYL…RVTPLDVTWQ (245 aa)) is the Clu domain. The span at 669–689 (KAQEEAANKEQSSEVTESKEQ) shows a compositional bias: basic and acidic residues. 2 disordered regions span residues 669-700 (KAQE…EALD) and 939-966 (ANGV…PSRA). 3 TPR repeats span residues 1040-1073 (AKLY…TERT), 1082-1115 (ILAY…WKII), and 1124-1157 (ITTM…CESL). 2 disordered regions span residues 1252 to 1273 (VQPQ…ANAS) and 1288 to 1317 (GGDA…KSSA).

This sequence belongs to the CLU family. In terms of assembly, may associate with the eukaryotic translation initiation factor 3 (eIF-3) complex.

It localises to the cytoplasm. In terms of biological role, mRNA-binding protein involved in proper cytoplasmic distribution of mitochondria. The protein is Clustered mitochondria protein homolog of Neosartorya fischeri (strain ATCC 1020 / DSM 3700 / CBS 544.65 / FGSC A1164 / JCM 1740 / NRRL 181 / WB 181) (Aspergillus fischerianus).